A 370-amino-acid chain; its full sequence is Probable trehalose-phosphate phosphatase J (370 aa).

This sequence belongs to the trehalose phosphatase family. Requires a divalent metal cation as cofactor.

It catalyses the reaction alpha,alpha-trehalose 6-phosphate + H2O = alpha,alpha-trehalose + phosphate. Its pathway is glycan biosynthesis; trehalose biosynthesis. In terms of biological role, removes the phosphate from trehalose 6-phosphate to produce free trehalose. Trehalose accumulation in plant may improve abiotic stress tolerance. This Arabidopsis thaliana (Mouse-ear cress) protein is Probable trehalose-phosphate phosphatase J (TPPJ).